The chain runs to 255 residues: Ribonuclease HII (255 aa).

Residues 72 to 255 enclose the RNase H type-2 domain; sequence RLIAGVDEAG…KTFAPVQSYC (184 aa). A divalent metal cation is bound by residues Asp78, Glu79, and Asp170.

The protein belongs to the RNase HII family. Mn(2+) is required as a cofactor. Mg(2+) serves as cofactor.

The protein resides in the cytoplasm. It carries out the reaction Endonucleolytic cleavage to 5'-phosphomonoester.. Endonuclease that specifically degrades the RNA of RNA-DNA hybrids. This chain is Ribonuclease HII, found in Bacillus velezensis (strain DSM 23117 / BGSC 10A6 / LMG 26770 / FZB42) (Bacillus amyloliquefaciens subsp. plantarum).